The primary structure comprises 415 residues: Gamma-glutamyl phosphate reductase (415 aa).

Belongs to the gamma-glutamyl phosphate reductase family.

It localises to the cytoplasm. The enzyme catalyses L-glutamate 5-semialdehyde + phosphate + NADP(+) = L-glutamyl 5-phosphate + NADPH + H(+). It participates in amino-acid biosynthesis; L-proline biosynthesis; L-glutamate 5-semialdehyde from L-glutamate: step 2/2. Catalyzes the NADPH-dependent reduction of L-glutamate 5-phosphate into L-glutamate 5-semialdehyde and phosphate. The product spontaneously undergoes cyclization to form 1-pyrroline-5-carboxylate. The protein is Gamma-glutamyl phosphate reductase of Ligilactobacillus salivarius (strain UCC118) (Lactobacillus salivarius).